Consider the following 163-residue polypeptide: NF-kappa-B inhibitor-interacting Ras-like protein 2 (163 aa).

Residues 1–163 (MGKSCKVVIC…SANWNLHPDH (163 aa)) form a small GTPase-like region. 11–18 (GQHGVGKT) provides a ligand contact to GTP. The short motif at 35–43 (MIETQEDIY) is the Effector region element. Residues 61-65 (DTRGL) and 120-123 (NKSD) each bind GTP.

The protein belongs to the small GTPase superfamily. Ras family. KappaB-Ras subfamily.

The protein resides in the cytoplasm. Its function is as follows. Atypical Ras-like protein that acts as a potent regulator of NF-kappa-B activity by preventing the degradation of NF-kappa-B inhibitor beta (NFKBIB) by most signals, explaining why NFKBIB is more resistant to degradation. The polypeptide is NF-kappa-B inhibitor-interacting Ras-like protein 2 (nkiras2) (Xenopus laevis (African clawed frog)).